The chain runs to 585 residues: Arginine--tRNA ligase (585 aa).

A 'HIGH' region motif is present at residues Pro126 to His136.

It belongs to the class-I aminoacyl-tRNA synthetase family. Monomer.

The protein resides in the cytoplasm. The catalysed reaction is tRNA(Arg) + L-arginine + ATP = L-arginyl-tRNA(Arg) + AMP + diphosphate. The chain is Arginine--tRNA ligase from Trichodesmium erythraeum (strain IMS101).